We begin with the raw amino-acid sequence, 89 residues long: Small ribosomal subunit protein uS15 (89 aa).

Belongs to the universal ribosomal protein uS15 family. Part of the 30S ribosomal subunit. Forms a bridge to the 50S subunit in the 70S ribosome, contacting the 23S rRNA.

Functionally, one of the primary rRNA binding proteins, it binds directly to 16S rRNA where it helps nucleate assembly of the platform of the 30S subunit by binding and bridging several RNA helices of the 16S rRNA. In terms of biological role, forms an intersubunit bridge (bridge B4) with the 23S rRNA of the 50S subunit in the ribosome. This chain is Small ribosomal subunit protein uS15, found in Ureaplasma parvum serovar 3 (strain ATCC 27815 / 27 / NCTC 11736).